We begin with the raw amino-acid sequence, 394 residues long: Carbamoyl phosphate synthase small chain (394 aa).

The interval 1 to 188 (MIRKERAILA…PLPYAFPTLR (188 aa)) is CPSase. Positions 49, 240, and 242 each coordinate L-glutamine. The region spanning 192–379 (RVVLMDFGIK…IEEIDAFEGA (188 aa)) is the Glutamine amidotransferase type-1 domain. Cys267 acts as the Nucleophile in catalysis. Leu268, Gln271, Asn309, Gly311, and Tyr312 together coordinate L-glutamine. Active-site residues include His352 and Glu354.

The protein belongs to the CarA family. As to quaternary structure, composed of two chains; the small (or glutamine) chain promotes the hydrolysis of glutamine to ammonia, which is used by the large (or ammonia) chain to synthesize carbamoyl phosphate. Tetramer of heterodimers (alpha,beta)4.

It carries out the reaction hydrogencarbonate + L-glutamine + 2 ATP + H2O = carbamoyl phosphate + L-glutamate + 2 ADP + phosphate + 2 H(+). It catalyses the reaction L-glutamine + H2O = L-glutamate + NH4(+). The protein operates within amino-acid biosynthesis; L-arginine biosynthesis; carbamoyl phosphate from bicarbonate: step 1/1. It participates in pyrimidine metabolism; UMP biosynthesis via de novo pathway; (S)-dihydroorotate from bicarbonate: step 1/3. In terms of biological role, small subunit of the glutamine-dependent carbamoyl phosphate synthetase (CPSase). CPSase catalyzes the formation of carbamoyl phosphate from the ammonia moiety of glutamine, carbonate, and phosphate donated by ATP, constituting the first step of 2 biosynthetic pathways, one leading to arginine and/or urea and the other to pyrimidine nucleotides. The small subunit (glutamine amidotransferase) binds and cleaves glutamine to supply the large subunit with the substrate ammonia. In Deinococcus geothermalis (strain DSM 11300 / CIP 105573 / AG-3a), this protein is Carbamoyl phosphate synthase small chain.